The chain runs to 193 residues: dTTP/UTP pyrophosphatase (193 aa).

D75 acts as the Proton acceptor in catalysis.

The protein belongs to the Maf family. YhdE subfamily. A divalent metal cation serves as cofactor.

It is found in the cytoplasm. The catalysed reaction is dTTP + H2O = dTMP + diphosphate + H(+). It carries out the reaction UTP + H2O = UMP + diphosphate + H(+). Its function is as follows. Nucleoside triphosphate pyrophosphatase that hydrolyzes dTTP and UTP. May have a dual role in cell division arrest and in preventing the incorporation of modified nucleotides into cellular nucleic acids. The chain is dTTP/UTP pyrophosphatase from Chlorobium luteolum (strain DSM 273 / BCRC 81028 / 2530) (Pelodictyon luteolum).